The following is a 362-amino-acid chain: Chorismate synthase (362 aa).

Residue Arg-46 participates in NADP(+) binding. FMN contacts are provided by residues 121-123, 237-238, Gly-277, 292-296, and Arg-318; these read RAS, NA, and KPTPS.

This sequence belongs to the chorismate synthase family. Homotetramer. The cofactor is FMNH2.

The enzyme catalyses 5-O-(1-carboxyvinyl)-3-phosphoshikimate = chorismate + phosphate. The protein operates within metabolic intermediate biosynthesis; chorismate biosynthesis; chorismate from D-erythrose 4-phosphate and phosphoenolpyruvate: step 7/7. In terms of biological role, catalyzes the anti-1,4-elimination of the C-3 phosphate and the C-6 proR hydrogen from 5-enolpyruvylshikimate-3-phosphate (EPSP) to yield chorismate, which is the branch point compound that serves as the starting substrate for the three terminal pathways of aromatic amino acid biosynthesis. This reaction introduces a second double bond into the aromatic ring system. The chain is Chorismate synthase from Campylobacter lari (strain RM2100 / D67 / ATCC BAA-1060).